The sequence spans 420 residues: Cytochrome c biogenesis protein Ccs1 (420 aa).

3 consecutive transmembrane segments (helical) span residues 12 to 32, 71 to 91, and 157 to 177; these read LRFS…GTVI, TWWF…CTFL, and IAPI…IVGS.

This sequence belongs to the Ccs1/CcsB family. As to quaternary structure, may interact with CcsA.

The protein resides in the plastid. It is found in the chloroplast thylakoid membrane. Functionally, required during biogenesis of c-type cytochromes (cytochrome c6 and cytochrome f) at the step of heme attachment. The polypeptide is Cytochrome c biogenesis protein Ccs1 (Phaeodactylum tricornutum (strain CCAP 1055/1)).